A 146-amino-acid chain; its full sequence is Protein MGF 100-3L (146 aa).

It belongs to the asfivirus MGF 100 family.

In terms of biological role, plays a role in virus cell tropism, and may be required for efficient virus replication in macrophages. This chain is Protein MGF 100-3L, found in Ornithodoros (relapsing fever ticks).